Consider the following 62-residue polypeptide: MARKCYITGRQAKSGNKRSHAMNKTKRRWGANVQKVRILVDGKPKRVYVSARALKSGKVERV.

It belongs to the bacterial ribosomal protein bL28 family.

The polypeptide is Large ribosomal subunit protein bL28 (Halalkalibacterium halodurans (strain ATCC BAA-125 / DSM 18197 / FERM 7344 / JCM 9153 / C-125) (Bacillus halodurans)).